The chain runs to 365 residues: Palmitoyltransferase ZDHHC20 (365 aa).

Topologically, residues 1–14 are cytoplasmic; it reads MAPWTLWRCCQRVV. Residues 15–35 traverse the membrane as a helical segment; it reads GWVPVLFITFVVVWSYYAYVV. Topologically, residues 36-53 are lumenal; the sequence is ELCVFTIFGNEENGKTVV. A helical membrane pass occupies residues 54–74; that stretch reads YLVAFHLFFVMFVWSYWMTIF. Residues 75–169 lie on the Cytoplasmic side of the membrane; it reads TSPASPSKEF…NNCVGFSNYK (95 aa). The DHHC domain occupies 126–176; that stretch reads RYCEKCQLIKPDRAHHCSACDSCILKMDHHCPWVNNCVGFSNYKFFLLFLL. 2 residues coordinate Zn(2+): Cys128 and Cys131. Substrate-binding positions include Lys135 and 140 to 143; that span reads HHCS. Zn(2+) contacts are provided by His141, Cys142, Cys145, Cys148, and His155. Cys156 (S-palmitoyl cysteine intermediate) is an active-site residue. Cys162 contacts Zn(2+). Residues 170 to 190 form a helical membrane-spanning segment; it reads FFLLFLLYSLLYCLFVAATVL. Residues 191–207 are Lumenal-facing; that stretch reads EYFIKFWTNELTDTRAK. A helical membrane pass occupies residues 208-231; sequence FHVLFLFFVSAMFFISVLSLFSYH. Residues 232 to 365 lie on the Cytoplasmic side of the membrane; the sequence is CWLVGKNRTT…NNHVTVAIEN (134 aa). Residues Ser305, Ser330, and Ser339 each carry the phosphoserine modification.

It belongs to the DHHC palmitoyltransferase family. In terms of processing, autopalmitoylated (in vitro).

It localises to the golgi apparatus membrane. The protein localises to the cell membrane. Its subcellular location is the cytoplasm. It is found in the perinuclear region. The protein resides in the endoplasmic reticulum membrane. It localises to the endoplasmic reticulum-Golgi intermediate compartment membrane. The enzyme catalyses L-cysteinyl-[protein] + hexadecanoyl-CoA = S-hexadecanoyl-L-cysteinyl-[protein] + CoA. It carries out the reaction L-cysteinyl-[protein] + tetradecanoyl-CoA = S-tetradecanoyl-L-cysteinyl-[protein] + CoA. The catalysed reaction is L-cysteinyl-[protein] + octadecanoyl-CoA = S-octadecanoyl-L-cysteinyl-[protein] + CoA. Its function is as follows. Palmitoyltransferase that could catalyze the addition of palmitate onto various protein substrates. Catalyzes palmitoylation of Cys residues in the cytoplasmic C-terminus of EGFR, and modulates the duration of EGFR signaling by modulating palmitoylation-dependent EGFR internalization and degradation. Has a preference for acyl-CoA with C16 fatty acid chains. Can also utilize acyl-CoA with C14 and C18 fatty acid chains. May palmitoylate CALHM1 subunit of gustatory voltage-gated ion channels and modulate channel gating and kinetics. Functionally, (Microbial infection) Dominant palmitoyltransferase responsible for lipidation of SARS coronavirus-2/SARS-CoV-2 spike protein. Through a sequential action with ZDHHC9, rapidly and efficiently palmitoylates spike protein following its synthesis in the endoplasmic reticulum (ER). In the infected cell, promotes spike biogenesis by protecting it from premature ER degradation, increases half-life and controls the lipid organization of its immediate membrane environment. Once the virus has formed, spike palmitoylation controls fusion with the target cell. The sequence is that of Palmitoyltransferase ZDHHC20 from Homo sapiens (Human).